Here is a 280-residue protein sequence, read N- to C-terminus: Probable S-methyl-5'-thioinosine phosphorylase (280 aa).

Phosphate is bound by residues threonine 8 and 50–51 (RH). A substrate-binding site is contributed by methionine 175. Phosphate is bound at residue threonine 176. 199 to 201 (NYA) contacts substrate.

This sequence belongs to the PNP/MTAP phosphorylase family. MTAP subfamily. In terms of assembly, homotrimer.

The catalysed reaction is S-methyl-5'-thioinosine + phosphate = 5-(methylsulfanyl)-alpha-D-ribose 1-phosphate + hypoxanthine. Its pathway is purine metabolism; purine nucleoside salvage. Catalyzes the reversible phosphorylation of S-methyl-5'-thioinosine (MTI) to hypoxanthine and 5-methylthioribose-1-phosphate. Involved in the breakdown of S-methyl-5'-thioadenosine (MTA), a major by-product of polyamine biosynthesis. Catabolism of (MTA) occurs via deamination to MTI and phosphorolysis to hypoxanthine. This chain is Probable S-methyl-5'-thioinosine phosphorylase, found in Methanothermobacter thermautotrophicus (strain ATCC 29096 / DSM 1053 / JCM 10044 / NBRC 100330 / Delta H) (Methanobacterium thermoautotrophicum).